Here is a 471-residue protein sequence, read N- to C-terminus: Ribonuclease 3 (471 aa).

A compositionally biased stretch (basic residues) spans 1 to 10 (MGSKVAGKKK). Disordered regions lie at residues 1–29 (MGSK…RENI) and 168–189 (NLNE…PTKA). Positions 20 to 29 (ENGSQQRENI) are enriched in polar residues. The span at 172–184 (KEDEEEDEGEDSY) shows a compositional bias: acidic residues. The RNase III domain maps to 227-331 (LSGSEMINAH…YIGGLMEDDP (105 aa)). In terms of domain architecture, DRBM spans 369–437 (NAKRQLYSLI…AENALRDKKM (69 aa)). The disordered stretch occupies residues 451–471 (SESVLKDPSQKNKKRKFSDTS). Over residues 461–471 (KNKKRKFSDTS) the composition is skewed to basic residues.

It carries out the reaction Endonucleolytic cleavage to 5'-phosphomonoester.. Its function is as follows. DsRNA-specific nuclease that cleaves eukaryotic pre-ribosomal RNA at the U3 snoRNP-dependent A0 site in the 5'-external transcribed spacer (ETS) and in the 3'-ETS. In vitro, cleaves synthetic 5'-ETS RNA A0 site in the absence of snoRNA or other factors. Has an essential growth function in addition to pre-rRNA processing. The chain is Ribonuclease 3 (RNT1) from Saccharomyces cerevisiae (strain ATCC 204508 / S288c) (Baker's yeast).